Reading from the N-terminus, the 457-residue chain is Antizyme inhibitor 2 (457 aa).

Residues 115-138 are necessary for polyamine uptake stimulation; it reads QVAQIKYAAKHGVRLLSFDNEVEL.

The protein belongs to the Orn/Lys/Arg decarboxylase class-II family. ODC antizyme inhibitor subfamily. In terms of assembly, monomer. Interacts with OAZ1, OAZ2 and OAZ3; this interaction disrupts the interaction between the antizyme and ODC1. Does not form a heterodimer with ODC1. Ubiquitinated, leading to its proteasomal degradation; a process that is reduced in presence of antizymes. May also be degraded through the lysosomal degradative pathway in a proteasomal-independent manner.

It is found in the nucleus. The protein resides in the cytoplasm. The protein localises to the perinuclear region. Its subcellular location is the membrane. It localises to the cytoplasmic vesicle. It is found in the endoplasmic reticulum-Golgi intermediate compartment. The protein resides in the golgi apparatus. The protein localises to the cis-Golgi network. Its subcellular location is the trans-Golgi network. It localises to the cytoplasmic granule. It is found in the cell projection. The protein resides in the axon. The protein localises to the dendrite. Its subcellular location is the perikaryon. Its function is as follows. Antizyme inhibitor (AZI) protein that positively regulates ornithine decarboxylase (ODC) activity and polyamine uptake. AZI is an enzymatically inactive ODC homolog that counteracts the negative effect of ODC antizymes (AZs) OAZ1, OAZ2 and OAZ3 on ODC activity by competing with ODC for antizyme-binding. Inhibits antizyme-dependent ODC degradation and releases ODC monomers from their inactive complex with antizymes, leading to formation of the catalytically active ODC homodimer and restoring polyamine production. Participates in the morphological integrity of the trans-Golgi network (TGN) and functions as a regulator of intracellular secretory vesicle trafficking. The polypeptide is Antizyme inhibitor 2 (Azin2) (Rattus norvegicus (Rat)).